We begin with the raw amino-acid sequence, 242 residues long: MAGHSKWANIQHKKARQDAKRGKIFTRLIKEITVAARMGGGDPGANPRLRLALEKAAENNMPKDNVQRAIDKGTGNLEGVEYIGLRYEGYGIGGAALMVDCLTDNKTRTVADVRHAFTKNGGNLGTDGCVAFNFVHQGYLVFEPGVDEDELMEAALEAGAEDVVTNDDGSIEVITAPNDWAGVKSALEAAGYKSVDGDVTMRAQNETELSGDDAVKMQKLIDALEDLDDVQDVYTSAVLNLD.

This sequence belongs to the TACO1 family.

It localises to the cytoplasm. In Neisseria gonorrhoeae (strain NCCP11945), this protein is Probable transcriptional regulatory protein NGK_1508.